A 476-amino-acid chain; its full sequence is Serine protease HTRA4 (476 aa).

The signal sequence occupies residues 1–31; that stretch reads MIRPQLRTAGLGRCLLPGLLLLLVPVLWAGA. The IGFBP N-terminal domain maps to 36-109; the sequence is TQPSCPAVCQ…PGFPSTCGCP (74 aa). Disulfide bonds link cysteine 40/cysteine 66, cysteine 44/cysteine 68, cysteine 49/cysteine 69, cysteine 55/cysteine 72, cysteine 80/cysteine 94, cysteine 88/cysteine 106, cysteine 108/cysteine 127, and cysteine 116/cysteine 152. In terms of domain architecture, Kazal-like spans 88 to 154; the sequence is CAPGLQCLQP…VPVQWGNCGD (67 aa). The segment at 202-362 is serine protease; it reads GSGFIVSEDG…IPSDRVRQFL (161 aa). Catalysis depends on charge relay system residues histidine 218, aspartate 248, and serine 326. The 92-residue stretch at 383–474 folds into the PDZ domain; the sequence is LQMLSLTVPL…NLLLTVIPET (92 aa).

It belongs to the peptidase S1C family.

The protein localises to the secreted. Functionally, serine protease. The chain is Serine protease HTRA4 (HTRA4) from Homo sapiens (Human).